Consider the following 55-residue polypeptide: Large ribosomal subunit protein bL33 (55 aa).

It belongs to the bacterial ribosomal protein bL33 family.

This Buchnera aphidicola subsp. Acyrthosiphon pisum (strain 5A) protein is Large ribosomal subunit protein bL33.